The chain runs to 427 residues: Glutamate-1-semialdehyde 2,1-aminomutase (427 aa).

Residue K265 is modified to N6-(pyridoxal phosphate)lysine.

The protein belongs to the class-III pyridoxal-phosphate-dependent aminotransferase family. HemL subfamily. Homodimer. Requires pyridoxal 5'-phosphate as cofactor.

The protein localises to the cytoplasm. The catalysed reaction is (S)-4-amino-5-oxopentanoate = 5-aminolevulinate. It functions in the pathway porphyrin-containing compound metabolism; protoporphyrin-IX biosynthesis; 5-aminolevulinate from L-glutamyl-tRNA(Glu): step 2/2. The chain is Glutamate-1-semialdehyde 2,1-aminomutase from Photorhabdus laumondii subsp. laumondii (strain DSM 15139 / CIP 105565 / TT01) (Photorhabdus luminescens subsp. laumondii).